A 620-amino-acid chain; its full sequence is Chaperone protein HscA homolog (620 aa).

It belongs to the heat shock protein 70 family.

Chaperone involved in the maturation of iron-sulfur cluster-containing proteins. Has a low intrinsic ATPase activity which is markedly stimulated by HscB. In Shewanella sp. (strain MR-7), this protein is Chaperone protein HscA homolog.